The following is a 289-amino-acid chain: Ribosomal RNA small subunit methyltransferase A (289 aa).

Residues asparagine 21, leucine 23, glycine 48, glutamate 69, aspartate 94, and asparagine 120 each contribute to the S-adenosyl-L-methionine site.

The protein belongs to the class I-like SAM-binding methyltransferase superfamily. rRNA adenine N(6)-methyltransferase family. RsmA subfamily.

It localises to the cytoplasm. The enzyme catalyses adenosine(1518)/adenosine(1519) in 16S rRNA + 4 S-adenosyl-L-methionine = N(6)-dimethyladenosine(1518)/N(6)-dimethyladenosine(1519) in 16S rRNA + 4 S-adenosyl-L-homocysteine + 4 H(+). Functionally, specifically dimethylates two adjacent adenosines (A1518 and A1519) in the loop of a conserved hairpin near the 3'-end of 16S rRNA in the 30S particle. May play a critical role in biogenesis of 30S subunits. This is Ribosomal RNA small subunit methyltransferase A from Haemophilus ducreyi (strain 35000HP / ATCC 700724).